The sequence spans 219 residues: Cytidylate kinase (219 aa).

Gly10–Thr18 is a binding site for ATP.

This sequence belongs to the cytidylate kinase family. Type 1 subfamily.

The protein resides in the cytoplasm. The catalysed reaction is CMP + ATP = CDP + ADP. It carries out the reaction dCMP + ATP = dCDP + ADP. This is Cytidylate kinase from Staphylococcus saprophyticus subsp. saprophyticus (strain ATCC 15305 / DSM 20229 / NCIMB 8711 / NCTC 7292 / S-41).